A 187-amino-acid chain; its full sequence is CASP-like protein SELMODRAFT_416718 (187 aa).

Residues 1–21 (MMFGGVGMATLPLSLIFAFKN) form a helical membrane-spanning segment. Over 22-100 (RPKCVITRAQ…EAFPQGEKAD (79 aa)) the chain is Extracellular. The helical transmembrane segment at 101–119 (TSWALTVLFYLAKLVFGIL) threads the bilayer. Topologically, residues 120-125 (GLALSV) are cytoplasmic. A helical membrane pass occupies residues 126–145 (IWLLHIIVFMLVNPPAFPFL). Residues 146–155 (NQVFIQLDSA) are Extracellular-facing. A helical transmembrane segment spans residues 156-176 (WGLLGTTAFAIFCYYLVMSVI). The Cytoplasmic portion of the chain corresponds to 177–187 (SGEMHSIYPMK).

It belongs to the Casparian strip membrane proteins (CASP) family. As to quaternary structure, homodimer and heterodimers.

It localises to the cell membrane. The sequence is that of CASP-like protein SELMODRAFT_416718 from Selaginella moellendorffii (Spikemoss).